The primary structure comprises 498 residues: ATP synthase subunit beta, chloroplastic (498 aa).

172-179 (GGAGVGKT) contacts ATP.

Belongs to the ATPase alpha/beta chains family. As to quaternary structure, F-type ATPases have 2 components, CF(1) - the catalytic core - and CF(0) - the membrane proton channel. CF(1) has five subunits: alpha(3), beta(3), gamma(1), delta(1), epsilon(1). CF(0) has four main subunits: a(1), b(1), b'(1) and c(9-12).

The protein resides in the plastid. It localises to the chloroplast thylakoid membrane. It carries out the reaction ATP + H2O + 4 H(+)(in) = ADP + phosphate + 5 H(+)(out). Produces ATP from ADP in the presence of a proton gradient across the membrane. The catalytic sites are hosted primarily by the beta subunits. In Spinacia oleracea (Spinach), this protein is ATP synthase subunit beta, chloroplastic.